Consider the following 215-residue polypeptide: MITIALPKGALLSDSIALFKQIGLDFTAFLDSSNRQLQISDPTNTAKALLVRAQDVPVYVEYGQAQLGIVGYDVLLEKTPKVANLADLKFGACRMSVAVPAKSPYRSSIELPPNGRVASKFVHCAEDYFRRLDIPVEIIPLYGSVELGPITGMSDAIVDLVSTGRTLRENGLVEIDVLFESTARLIAHPLSYRLNLDHLDQWVNKLRQINLKPVA.

It belongs to the ATP phosphoribosyltransferase family. Short subfamily. In terms of assembly, heteromultimer composed of HisG and HisZ subunits.

It localises to the cytoplasm. It carries out the reaction 1-(5-phospho-beta-D-ribosyl)-ATP + diphosphate = 5-phospho-alpha-D-ribose 1-diphosphate + ATP. Its pathway is amino-acid biosynthesis; L-histidine biosynthesis; L-histidine from 5-phospho-alpha-D-ribose 1-diphosphate: step 1/9. Its function is as follows. Catalyzes the condensation of ATP and 5-phosphoribose 1-diphosphate to form N'-(5'-phosphoribosyl)-ATP (PR-ATP). Has a crucial role in the pathway because the rate of histidine biosynthesis seems to be controlled primarily by regulation of HisG enzymatic activity. The protein is ATP phosphoribosyltransferase of Gloeothece citriformis (strain PCC 7424) (Cyanothece sp. (strain PCC 7424)).